The primary structure comprises 508 residues: ATP synthase subunit alpha, chloroplastic (508 aa).

Position 170 to 177 (170 to 177) interacts with ATP; sequence GDRQTGKT.

It belongs to the ATPase alpha/beta chains family. As to quaternary structure, F-type ATPases have 2 components, CF(1) - the catalytic core - and CF(0) - the membrane proton channel. CF(1) has five subunits: alpha(3), beta(3), gamma(1), delta(1), epsilon(1). CF(0) has four main subunits: a, b, b' and c.

Its subcellular location is the plastid. It localises to the chloroplast thylakoid membrane. The enzyme catalyses ATP + H2O + 4 H(+)(in) = ADP + phosphate + 5 H(+)(out). In terms of biological role, produces ATP from ADP in the presence of a proton gradient across the membrane. The alpha chain is a regulatory subunit. The chain is ATP synthase subunit alpha, chloroplastic from Helianthus annuus (Common sunflower).